Consider the following 547-residue polypeptide: Chaperonin GroEL (547 aa).

ATP is bound by residues 30–33 (TLGP), lysine 51, 87–91 (DGTTT), glycine 415, 479–481 (NAA), and aspartate 495.

Belongs to the chaperonin (HSP60) family. Forms a cylinder of 14 subunits composed of two heptameric rings stacked back-to-back. Interacts with the co-chaperonin GroES.

The protein resides in the cytoplasm. It carries out the reaction ATP + H2O + a folded polypeptide = ADP + phosphate + an unfolded polypeptide.. Its function is as follows. Together with its co-chaperonin GroES, plays an essential role in assisting protein folding. The GroEL-GroES system forms a nano-cage that allows encapsulation of the non-native substrate proteins and provides a physical environment optimized to promote and accelerate protein folding. In Pseudomonas fluorescens (strain ATCC BAA-477 / NRRL B-23932 / Pf-5), this protein is Chaperonin GroEL.